A 320-amino-acid polypeptide reads, in one-letter code: Putative thiosulfate sulfurtransferase (320 aa).

Positions 1-37 are cleaved as a signal peptide; sequence MSVRSLRWPRQKAFLAVISLVVAVLLAVPGWLTPATA. 2 Rhodanese domains span residues 56-166 and 194-315; these read NNKQ…PVTK and LTGK…PVET. The Cysteine persulfide intermediate role is filled by C274.

Its subcellular location is the periplasm. The catalysed reaction is thiosulfate + hydrogen cyanide = thiocyanate + sulfite + 2 H(+). In terms of biological role, may be a sulfotransferase involved in the transport of sulfate. Displays very low rhodanese activity. In Synechococcus elongatus (strain ATCC 33912 / PCC 7942 / FACHB-805) (Anacystis nidulans R2), this protein is Putative thiosulfate sulfurtransferase (rhdA).